The sequence spans 527 residues: T-complex protein 1 subunit beta (527 aa).

Serine 2 bears the N-acetylserine mark.

This sequence belongs to the TCP-1 chaperonin family. As to quaternary structure, heterooligomeric complex of about 850 to 900 kDa that forms two stacked rings, 12 to 16 nm in diameter. Interacts with PLP2; this interaction leads to inhibition of CCT complex mediated actin folding.

The protein resides in the cytoplasm. In terms of biological role, molecular chaperone; assists the folding of proteins upon ATP hydrolysis. Known to play a role, in vitro, in the folding of actin and tubulin. In yeast may play a role in mitotic spindle formation. This Saccharomyces cerevisiae (strain ATCC 204508 / S288c) (Baker's yeast) protein is T-complex protein 1 subunit beta (CCT2).